Here is a 600-residue protein sequence, read N- to C-terminus: Aspartate--tRNA(Asp/Asn) ligase (600 aa).

Glu187 is a binding site for L-aspartate. The aspartate stretch occupies residues 211–214; the sequence is QIFK. Arg233 and His463 together coordinate L-aspartate. 233 to 235 serves as a coordination point for ATP; it reads RDE. An ATP-binding site is contributed by Glu497. Arg504 lines the L-aspartate pocket. Residue 549–552 participates in ATP binding; the sequence is GVDR.

The protein belongs to the class-II aminoacyl-tRNA synthetase family. Type 1 subfamily. As to quaternary structure, homodimer.

The protein localises to the cytoplasm. The catalysed reaction is tRNA(Asx) + L-aspartate + ATP = L-aspartyl-tRNA(Asx) + AMP + diphosphate. In terms of biological role, aspartyl-tRNA synthetase with relaxed tRNA specificity since it is able to aspartylate not only its cognate tRNA(Asp) but also tRNA(Asn). Reaction proceeds in two steps: L-aspartate is first activated by ATP to form Asp-AMP and then transferred to the acceptor end of tRNA(Asp/Asn). The chain is Aspartate--tRNA(Asp/Asn) ligase from Wolbachia sp. subsp. Drosophila simulans (strain wRi).